The chain runs to 552 residues: MSEKQVVGILGGGQLGRMMVEAAHRLNIKCIILDAANSPAKQIDGGREHIDASFTDPDAIVELSKKCTLLTTEIEHINTDALAAVTKSVAVEPSPATLRCIQDKYLQKQHLQVFKIALPEFCDAPDQESVEKAGQEFGYPFVLKSKTLAYDGRGNYVVHQPSEIPTAIKALGDRPLYVEKFVPFSMEIAVMVVRSLDGKVYAYPTTETIQKDNVCHLVYAPARLPFSIQQRAQTLAMDAVRTFEGAGIYGVEMFVLQDGETILLNEIAPRPHNSGHYTIEACPTSQFEAHLRAICGLPFSEINTQLSTSTTHALMVNILGTDDPDYVSKIAKRSLSIPGATLHLYGKAESRKGRKMGHVTIISDSPQECERRYQMLLDVKDPVESPVVGIIMGSDSDLSKMKDAAVILDEFKVPYELTIVSAHRTPDRMVTYARTAASRGLRVIIAGAGGAAHLPGMVAAMTPLPVIGVPVKGSTLDGVDSLHSIVQMPRGVPVATVAINNSQNAGILACRILATFQPSLLAAMESFMDNMKEIVLEKADKLEKVGWKNYSA.

One can recognise an ATP-grasp domain in the interval 108–295 (KQHLQVFKIA…QFEAHLRAIC (188 aa)). An ATP-binding site is contributed by 134-189 (GQEFGYPFVLKSKTLAYDGRGNYVVHQPSEIPTAIKALGDRPLYVEKFVPFSMEIA).

In the C-terminal section; belongs to the AIR carboxylase family. Class I subfamily.

The catalysed reaction is 5-amino-1-(5-phospho-D-ribosyl)imidazole-4-carboxylate + H(+) = 5-amino-1-(5-phospho-beta-D-ribosyl)imidazole + CO2. It participates in purine metabolism; IMP biosynthesis via de novo pathway; 5-amino-1-(5-phospho-D-ribosyl)imidazole-4-carboxylate from 5-amino-1-(5-phospho-D-ribosyl)imidazole (carboxylase route): step 1/1. This is Phosphoribosylaminoimidazole carboxylase (ade6) from Schizosaccharomyces pombe (strain 972 / ATCC 24843) (Fission yeast).